The following is a 333-amino-acid chain: Lipoyl synthase (333 aa).

The tract at residues 1-29 (MTDSASGASAVANIATPSNEPYDATRKQK) is disordered. Positions 80, 85, 91, 106, 110, 113, and 320 each coordinate [4Fe-4S] cluster. The region spanning 91–309 (CFGKGTATFM…EEKAYEMGFT (219 aa)) is the Radical SAM core domain.

The protein belongs to the radical SAM superfamily. Lipoyl synthase family. [4Fe-4S] cluster serves as cofactor.

It is found in the cytoplasm. It catalyses the reaction [[Fe-S] cluster scaffold protein carrying a second [4Fe-4S](2+) cluster] + N(6)-octanoyl-L-lysyl-[protein] + 2 oxidized [2Fe-2S]-[ferredoxin] + 2 S-adenosyl-L-methionine + 4 H(+) = [[Fe-S] cluster scaffold protein] + N(6)-[(R)-dihydrolipoyl]-L-lysyl-[protein] + 4 Fe(3+) + 2 hydrogen sulfide + 2 5'-deoxyadenosine + 2 L-methionine + 2 reduced [2Fe-2S]-[ferredoxin]. It participates in protein modification; protein lipoylation via endogenous pathway; protein N(6)-(lipoyl)lysine from octanoyl-[acyl-carrier-protein]: step 2/2. Its function is as follows. Catalyzes the radical-mediated insertion of two sulfur atoms into the C-6 and C-8 positions of the octanoyl moiety bound to the lipoyl domains of lipoate-dependent enzymes, thereby converting the octanoylated domains into lipoylated derivatives. The chain is Lipoyl synthase from Ralstonia nicotianae (strain ATCC BAA-1114 / GMI1000) (Ralstonia solanacearum).